A 218-amino-acid chain; its full sequence is Ribose-5-phosphate isomerase A (218 aa).

Substrate contacts are provided by residues 28–31 (TGST), 81–84 (DSAD), and 94–97 (KGGG). The active-site Proton acceptor is Glu-103. Position 121 (Lys-121) interacts with substrate.

This sequence belongs to the ribose 5-phosphate isomerase family. In terms of assembly, homodimer.

It catalyses the reaction aldehydo-D-ribose 5-phosphate = D-ribulose 5-phosphate. Its pathway is carbohydrate degradation; pentose phosphate pathway; D-ribose 5-phosphate from D-ribulose 5-phosphate (non-oxidative stage): step 1/1. In terms of biological role, catalyzes the reversible conversion of ribose-5-phosphate to ribulose 5-phosphate. The chain is Ribose-5-phosphate isomerase A from Buchnera aphidicola subsp. Baizongia pistaciae (strain Bp).